The primary structure comprises 211 residues: BAG family molecular chaperone regulator 2 (211 aa).

Alanine 2 is modified (N-acetylalanine). Phosphoserine occurs at positions 20, 31, and 73. A coiled-coil region spans residues 20–61; that stretch reads SMADRSSRLLESLDQLELRVEALREAATAVEQEKEVLLEMIH. The BAG domain maps to 109–189; sequence SLKHATRIID…NIENADKAIK (81 aa).

In terms of assembly, binds to the ATPase domain of HSP/HSC70 chaperones. May interact with NWD1. Interacts with HSPA1A (via NBD), HSPA1B (via NBD) and HSPA8. May interact with DNJC9; the interaction seems to be histone-dependent.

In terms of biological role, co-chaperone for HSP70 and HSC70 chaperone proteins. Acts as a nucleotide-exchange factor (NEF) promoting the release of ADP from the HSP70 and HSC70 proteins thereby triggering client/substrate protein release. The polypeptide is BAG family molecular chaperone regulator 2 (Bos taurus (Bovine)).